The chain runs to 595 residues: Merlin (595 aa).

Ser-13 carries the phosphoserine modification. One can recognise an FERM domain in the interval 22-311; that stretch reads FTVRIVTMDA…GNHDLFMRRR (290 aa). At Ser-518 the chain carries Phosphoserine; by PAK.

Interacts with NHERF1, HGS and AGAP2. Interacts with SGSM3. Interacts (via FERM domain) with MPP1. Interacts with LAYN and WWC1. Interacts with the CUL4A-RBX1-DDB1-VprBP/DCAF1 E3 ubiquitin-protein ligase complex. The unphosphorylated form interacts (via FERM domain) with VPRBP/DCAF1. Interacts (via FERM domain) with NOP53; the interaction is direct. Interacts with SCHIP1; the interaction is direct. Post-translationally, phosphorylation of Ser-518 inhibits nuclear localization by disrupting the intramolecular association of the FERM domain with the C-terminal tail. Ubiquitinated by the CUL4A-RBX1-DDB1-DCAF1/VprBP E3 ubiquitin-protein ligase complex for ubiquitination and subsequent proteasome-dependent degradation. In terms of processing, phosphorylation of Ser-518 inhibits nuclear localization by disrupting the intramolecular association of the FERM domain with the C-terminal tail. The dephosphorylation of Ser-518 favors the interaction with NOP53.

Its subcellular location is the cell membrane. The protein localises to the cell projection. It is found in the cytoplasm. It localises to the cytoskeleton. The protein resides in the nucleus. In terms of biological role, probable regulator of the Hippo/SWH (Sav/Wts/Hpo) signaling pathway, a signaling pathway that plays a pivotal role in tumor suppression by restricting proliferation and promoting apoptosis. Along with WWC1 can synergistically induce the phosphorylation of LATS1 and LATS2 and can probably function in the regulation of the Hippo/SWH (Sav/Wts/Hpo) signaling pathway. May act as a membrane stabilizing protein. May inhibit PI3 kinase by binding to AGAP2 and impairing its stimulating activity. Suppresses cell proliferation and tumorigenesis by inhibiting the CUL4A-RBX1-DDB1-VprBP/DCAF1 E3 ubiquitin-protein ligase complex. The protein is Merlin (NF2) of Papio anubis (Olive baboon).